Reading from the N-terminus, the 113-residue chain is Hydrogenase maturation factor HypA (113 aa).

His-2 provides a ligand contact to Ni(2+). Positions 73, 75, 89, and 92 each coordinate Zn(2+).

It belongs to the HypA/HybF family.

In terms of biological role, involved in the maturation of [NiFe] hydrogenases. Required for nickel insertion into the metal center of the hydrogenase. This Methanocella arvoryzae (strain DSM 22066 / NBRC 105507 / MRE50) protein is Hydrogenase maturation factor HypA.